The primary structure comprises 222 residues: Putative N-acetylmannosamine-6-phosphate 2-epimerase (222 aa).

Belongs to the NanE family.

The catalysed reaction is an N-acyl-D-glucosamine 6-phosphate = an N-acyl-D-mannosamine 6-phosphate. Its pathway is amino-sugar metabolism; N-acetylneuraminate degradation; D-fructose 6-phosphate from N-acetylneuraminate: step 3/5. Functionally, converts N-acetylmannosamine-6-phosphate (ManNAc-6-P) to N-acetylglucosamine-6-phosphate (GlcNAc-6-P). This chain is Putative N-acetylmannosamine-6-phosphate 2-epimerase, found in Staphylococcus aureus (strain Mu3 / ATCC 700698).